The chain runs to 726 residues: Amino-acid acetyltransferase, mitochondrial (726 aa).

The span at 1 to 18 (MSSRTLVGLRSTTSTHLQ) shows a compositional bias: polar residues. The transit peptide at 1 to 44 (MSSRTLVGLRSTTSTHLQRSGVAAAAAVSSSSTSSSGSAPRRCL) directs the protein to the mitochondrion. The tract at residues 1 to 64 (MSSRTLVGLR…SAEFSSSSKS (64 aa)) is disordered. Residues 20–39 (SGVAAAAAVSSSSTSSSGSA) show a composition bias toward low complexity. Residues 45-58 (SSASGRQVQQSAEF) show a composition bias toward polar residues. Positions 547–716 (DRPRLGLDDP…YEAVCRSIQP (170 aa)) constitute an N-acetyltransferase domain.

The protein belongs to the acetyltransferase family.

It is found in the mitochondrion. It catalyses the reaction L-glutamate + acetyl-CoA = N-acetyl-L-glutamate + CoA + H(+). The protein operates within amino-acid biosynthesis; L-arginine biosynthesis; N(2)-acetyl-L-ornithine from L-glutamate: step 1/4. In terms of biological role, N-acetylglutamate synthase involved in arginine biosynthesis. This chain is Amino-acid acetyltransferase, mitochondrial (arg2), found in Aspergillus niger (strain ATCC MYA-4892 / CBS 513.88 / FGSC A1513).